Reading from the N-terminus, the 264-residue chain is Thymidylate synthase (264 aa).

Arginine 21 is a dUMP binding site. Histidine 51 provides a ligand contact to (6R)-5,10-methylene-5,6,7,8-tetrahydrofolate. 126–127 is a dUMP binding site; sequence RR. Cysteine 146 acts as the Nucleophile in catalysis. DUMP contacts are provided by residues 166–169, asparagine 177, and 207–209; these read RSCD and HLY. Aspartate 169 provides a ligand contact to (6R)-5,10-methylene-5,6,7,8-tetrahydrofolate. Residue alanine 263 participates in (6R)-5,10-methylene-5,6,7,8-tetrahydrofolate binding.

The protein belongs to the thymidylate synthase family. Bacterial-type ThyA subfamily. Homodimer.

The protein resides in the cytoplasm. The enzyme catalyses dUMP + (6R)-5,10-methylene-5,6,7,8-tetrahydrofolate = 7,8-dihydrofolate + dTMP. It functions in the pathway pyrimidine metabolism; dTTP biosynthesis. Functionally, catalyzes the reductive methylation of 2'-deoxyuridine-5'-monophosphate (dUMP) to 2'-deoxythymidine-5'-monophosphate (dTMP) while utilizing 5,10-methylenetetrahydrofolate (mTHF) as the methyl donor and reductant in the reaction, yielding dihydrofolate (DHF) as a by-product. This enzymatic reaction provides an intracellular de novo source of dTMP, an essential precursor for DNA biosynthesis. The protein is Thymidylate synthase of Shewanella sp. (strain ANA-3).